The primary structure comprises 399 residues: Zinc finger HIT domain-containing protein 2 (399 aa).

M1 bears the N-acetylmethionine mark. Residues C7, C10, C22, C25, C30, C34, H38, and C41 each coordinate Zn(2+). Residues 7-41 form an HIT-type zinc finger; the sequence is CGFCPAGEALPARYTCPRCNAPYCSLRCYRAHGAC. 2 disordered regions span residues 70–97 and 152–175; these read RLRE…GLSG and AEPE…AEPF. Residues 86-96 show a composition bias toward gly residues; the sequence is LGPGARPGGLS. T161 carries the post-translational modification Phosphothreonine.

As to quaternary structure, interacts (via HIT-type zinc finger) with RUVBL2 in the presence of ATP or ADP; shows a stronger interaction in the presence of ADP. As to expression, low expression in most tissues; highly expressed in testis; particularly in seminiferous tubules.

May act as a bridging factor mediating the interaction between the R2TP/Prefoldin-like (R2TP/PFDL) complex and U5 small nuclear ribonucleoprotein (U5 snRNP). Required for the interaction of R2TP complex subunit RPAP3 and prefoldin-like subunit URI1 with U5 snRNP proteins EFTUD2 and PRPF8. May play a role in regulating the composition of the U5 snRNP complex. This chain is Zinc finger HIT domain-containing protein 2 (Znhit2), found in Mus musculus (Mouse).